Reading from the N-terminus, the 118-residue chain is Large ribosomal subunit protein bL20 (118 aa).

The protein belongs to the bacterial ribosomal protein bL20 family.

Binds directly to 23S ribosomal RNA and is necessary for the in vitro assembly process of the 50S ribosomal subunit. It is not involved in the protein synthesizing functions of that subunit. This chain is Large ribosomal subunit protein bL20, found in Pseudoalteromonas atlantica (strain T6c / ATCC BAA-1087).